The chain runs to 428 residues: Gamma-glutamyl phosphate reductase (428 aa).

The protein belongs to the gamma-glutamyl phosphate reductase family.

The protein localises to the cytoplasm. The catalysed reaction is L-glutamate 5-semialdehyde + phosphate + NADP(+) = L-glutamyl 5-phosphate + NADPH + H(+). The protein operates within amino-acid biosynthesis; L-proline biosynthesis; L-glutamate 5-semialdehyde from L-glutamate: step 2/2. In terms of biological role, catalyzes the NADPH-dependent reduction of L-glutamate 5-phosphate into L-glutamate 5-semialdehyde and phosphate. The product spontaneously undergoes cyclization to form 1-pyrroline-5-carboxylate. The polypeptide is Gamma-glutamyl phosphate reductase (Clostridium tetani (strain Massachusetts / E88)).